A 340-amino-acid chain; its full sequence is MERRRRPTLEMVAALAGVGRGTVSRVINGSDQVSPATREAVKRAIKELGYVPNRAARTLVTRRTDTVALVVSENNQKLFAEPFYAGIVLGVGVALSERGFQFVLATGRSGIEHERLGGYLAGQHVDGVLLLSLHRDDPLPQMLDEAGVPYVYGGRPLGVPEEQVSYVDIDNIGGGRQATQRLIETGHRRIATIAGPQDMVAGVERLQGYREALLAAGMEYDETLVSYGDFTYDSGVAAMRELLDRAPDVDAVFAASDLMGLAALRVLRASGRRVPEDVAVVGYDDSTVAEHAEPPMTSVNQPTELMGREMARLLVDRITGETTEPVRLVLETHLMVRESG.

One can recognise an HTH lacI-type domain in the interval 1–61 (MERRRRPTLE…PNRAARTLVT (61 aa)). The segment at residues 9–28 (LEMVAALAGVGRGTVSRVIN) is a DNA-binding region (H-T-H motif).

The protein resides in the cytoplasm. Activity is controlled by cytoplasmic cellobiose levels. Binding of CelR to the celE promoter is inhibited specifically by low concentrations of cellobiose, the major end product of cellulases. Activity may also be regulated through post-translational modification. Transcriptional regulator that regulates the expression of all six cellulases, encoded by the cel genes (designated celA through celF). Acts as a repressor. Specifically binds to a 14-bp inverted repeat site, which is present in the upstream region of the cellulase genes. The sequence is that of HTH-type transcriptional regulator CelR from Thermobifida fusca (Thermomonospora fusca).